The following is a 341-amino-acid chain: MTEQRPIAVLGGGSFGTAVANLLAENGHAVRQWMRDPEQAEAIRVHRENPRYLKGIKIHPAVEPVTDLLETLTACDLCFVALPSSALRSVLAPHAERLAGKLLVSLTKGIEAQTFKLMSEILEEIAPQARIGVLSGPNLAREVAEHALTATVVASEDEELCERVQAVLHGRTFRVYASSDRFGVELGGALKNVYAIIAGMAVALGMGENTKSMLITRALAEMTRFAVNQGANPMTFLGLAGVGDLIVTCSSPKSRNYQVGFALGQGLSLEDAVTRLGEVAEGVNTLKVLKAKAQEVGVYMPLVAGLHAILFEGRTLNQVIELLMRAEPKTDVDFISTSGFN.

NADPH is bound by residues Ser14, Phe15, Arg35, and Lys108. Residues Lys108 and Gly136 each coordinate sn-glycerol 3-phosphate. Residue Ala140 coordinates NADPH. Lys191, Asp244, Ser254, Arg255, and Asn256 together coordinate sn-glycerol 3-phosphate. Residue Lys191 is the Proton acceptor of the active site. Arg255 is a binding site for NADPH. 2 residues coordinate NADPH: Val279 and Glu281.

It belongs to the NAD-dependent glycerol-3-phosphate dehydrogenase family.

It localises to the cytoplasm. It carries out the reaction sn-glycerol 3-phosphate + NAD(+) = dihydroxyacetone phosphate + NADH + H(+). It catalyses the reaction sn-glycerol 3-phosphate + NADP(+) = dihydroxyacetone phosphate + NADPH + H(+). Its pathway is membrane lipid metabolism; glycerophospholipid metabolism. Catalyzes the reduction of the glycolytic intermediate dihydroxyacetone phosphate (DHAP) to sn-glycerol 3-phosphate (G3P), the key precursor for phospholipid synthesis. This Pseudomonas fluorescens (strain SBW25) protein is Glycerol-3-phosphate dehydrogenase [NAD(P)+].